We begin with the raw amino-acid sequence, 367 residues long: Anthranilate phosphoribosyltransferase (367 aa).

Residues 1–17 (MVLSSEASSAADHSAAA) are compositionally biased toward low complexity. The interval 1-22 (MVLSSEASSAADHSAAAPIPTS) is disordered. Residues Gly-104, 107–108 (GD), Thr-112, 114–117 (NLST), 132–140 (KHGNRAASS), and Gly-144 contribute to the 5-phospho-alpha-D-ribose 1-diphosphate site. Residue Gly-104 coordinates anthranilate. Residue Ser-116 participates in Mg(2+) binding. Asn-135 lines the anthranilate pocket. Residue Arg-190 coordinates anthranilate. 2 residues coordinate Mg(2+): Asp-248 and Glu-249.

This sequence belongs to the anthranilate phosphoribosyltransferase family. In terms of assembly, homodimer. Requires Mg(2+) as cofactor.

It catalyses the reaction N-(5-phospho-beta-D-ribosyl)anthranilate + diphosphate = 5-phospho-alpha-D-ribose 1-diphosphate + anthranilate. It participates in amino-acid biosynthesis; L-tryptophan biosynthesis; L-tryptophan from chorismate: step 2/5. Catalyzes the transfer of the phosphoribosyl group of 5-phosphorylribose-1-pyrophosphate (PRPP) to anthranilate to yield N-(5'-phosphoribosyl)-anthranilate (PRA). This chain is Anthranilate phosphoribosyltransferase, found in Mycobacterium marinum (strain ATCC BAA-535 / M).